The sequence spans 515 residues: Maturase K (515 aa).

It belongs to the intron maturase 2 family. MatK subfamily.

It localises to the plastid. It is found in the chloroplast. Usually encoded in the trnK tRNA gene intron. Probably assists in splicing its own and other chloroplast group II introns. The protein is Maturase K of Pinus leiophylla (Chihuahua pine).